The primary structure comprises 937 residues: Translation initiation factor IF-2 (937 aa).

Disordered stretches follow at residues 157–230 (KEAQ…AARK) and 250–346 (IKAP…ESNF). A compositionally biased stretch (basic and acidic residues) spans 173–205 (EAQKADAAKPVEAKADESAQEEKKRVAAEESKK). Over residues 252–265 (APEPAAPVAAKPAE) the composition is skewed to low complexity. A compositionally biased stretch (basic and acidic residues) spans 267–293 (TLHKPADKKAGEKKDEKKPAVTADKKS). Positions 295-304 (KSANVSSTWQ) are enriched in polar residues. In terms of domain architecture, tr-type G spans 437-606 (PRAPVVTVMG…LLQAEVLELK (170 aa)). The G1 stretch occupies residues 446–453 (GHVDHGKT). 446-453 (GHVDHGKT) contributes to the GTP binding site. The interval 471 to 475 (GITQH) is G2. Positions 492–495 (DTPG) are G3. GTP-binding positions include 492–496 (DTPGH) and 546–549 (NKID). Residues 546 to 549 (NKID) are G4. The tract at residues 582–584 (SAK) is G5.

Belongs to the TRAFAC class translation factor GTPase superfamily. Classic translation factor GTPase family. IF-2 subfamily.

Its subcellular location is the cytoplasm. One of the essential components for the initiation of protein synthesis. Protects formylmethionyl-tRNA from spontaneous hydrolysis and promotes its binding to the 30S ribosomal subunits. Also involved in the hydrolysis of GTP during the formation of the 70S ribosomal complex. The chain is Translation initiation factor IF-2 from Janthinobacterium sp. (strain Marseille) (Minibacterium massiliensis).